A 415-amino-acid chain; its full sequence is Histidine--tRNA ligase (415 aa).

Belongs to the class-II aminoacyl-tRNA synthetase family. As to quaternary structure, homodimer.

It localises to the cytoplasm. The enzyme catalyses tRNA(His) + L-histidine + ATP = L-histidyl-tRNA(His) + AMP + diphosphate + H(+). In Rickettsia bellii (strain RML369-C), this protein is Histidine--tRNA ligase.